A 551-amino-acid chain; its full sequence is Probable inorganic carbon transporter subunit DabB2 (551 aa).

14 helical membrane passes run 6 to 26, 42 to 62, 65 to 85, 86 to 106, 132 to 152, 187 to 207, 217 to 237, 252 to 272, 284 to 304, 321 to 341, 374 to 394, 404 to 424, 434 to 454, and 469 to 489; these read SHTT…AAVI, VQWT…SFLF, QQNL…LALS, IQVN…LSVI, GFFL…AIIA, LLLA…FSQI, LSIA…LKSA, PTPV…IIVL, ALLL…LVML, LGFM…LHLV, VVAW…IAAA, MLPA…LKAL, VAAG…EVFI, and PLLD…VAWL.

This sequence belongs to the inorganic carbon transporter (TC 9.A.2) DabB family. In terms of assembly, forms a complex with DabA2, possibly a heterodimer.

It is found in the cell inner membrane. Uptake of inorganic carbon by cells in the presence of thiosulphate is fully inhibited by the uncouplers carbonyl cyanide m-chlorophenyl hydrazone (CCCP), carbonyl cyanide p-trifluoromethoxyphenyl hydrazone (FCCP), S13 or SF6847. Not inhibited by the ATPase inhibitor N,N-dicyclohexylcarbodiimide (DCCD). Inorganic carbon uptake is inhibited by the ionophore carbonyl cyanide m-chlorophenyl hydrazone (CCCP), suggesting uptake is coupled to a cation gradient. Its function is as follows. Part of an energy-coupled inorganic carbon pump; its substrate may be carbon dioxide. Expression of both dabA2 and dabB2 (DAB2) restores growth in ambient air to E.coli deleted of its carbonic anhydrase genes (called CAfree, deletion of 'can' and 'cynT'); neither dabA2 or dabB2 alone is sufficient. Rescue is pH-independent, suggesting it transports CO(2) and not carbonate ions. Together the genes allow greater than normal uptake of inorganic carbon by E.coli. Uptake of carbon dioxide rather than bicarbonate has been suggested based on kinetic calculations. This chain is Probable inorganic carbon transporter subunit DabB2, found in Halothiobacillus neapolitanus (strain ATCC 23641 / c2) (Thiobacillus neapolitanus).